Here is a 318-residue protein sequence, read N- to C-terminus: ADP-L-glycero-D-manno-heptose-6-epimerase (318 aa).

Residues 10–11 (FI), 31–32 (DD), Lys38, Lys53, and 79–83 (EGACS) contribute to the NADP(+) site. Tyr144 functions as the Proton acceptor in the catalytic mechanism. Lys148 contributes to the NADP(+) binding site. Asn173 is a substrate binding site. NADP(+)-binding residues include Val174 and Lys182. Lys182 (proton acceptor) is an active-site residue. Substrate-binding positions include Ser184, His191, 205–208 (FEGC), Arg218, and Tyr282.

This sequence belongs to the NAD(P)-dependent epimerase/dehydratase family. HldD subfamily. As to quaternary structure, homopentamer. It depends on NADP(+) as a cofactor.

The enzyme catalyses ADP-D-glycero-beta-D-manno-heptose = ADP-L-glycero-beta-D-manno-heptose. It functions in the pathway nucleotide-sugar biosynthesis; ADP-L-glycero-beta-D-manno-heptose biosynthesis; ADP-L-glycero-beta-D-manno-heptose from D-glycero-beta-D-manno-heptose 7-phosphate: step 4/4. Functionally, catalyzes the interconversion between ADP-D-glycero-beta-D-manno-heptose and ADP-L-glycero-beta-D-manno-heptose via an epimerization at carbon 6 of the heptose. The protein is ADP-L-glycero-D-manno-heptose-6-epimerase of Aeromonas hydrophila subsp. hydrophila (strain ATCC 7966 / DSM 30187 / BCRC 13018 / CCUG 14551 / JCM 1027 / KCTC 2358 / NCIMB 9240 / NCTC 8049).